The primary structure comprises 671 residues: Pescadillo homolog (671 aa).

Coiled-coil stretches lie at residues 294 to 323 and 548 to 584; these read NQAQ…ELFR and QALR…TRKM. The BRCT domain occupies 317-403; it reads KVRELFRGLT…LVLPVTGYRI (87 aa). Disordered stretches follow at residues 552 to 577 and 634 to 671; these read KAQE…VKRQ and GLVN…KWVQ. The segment covering 634-651 has biased composition (basic and acidic residues); the sequence is GLVNKRLEARRQRAEAKG.

It belongs to the pescadillo family.

It localises to the nucleus. Its subcellular location is the nucleolus. It is found in the nucleoplasm. In terms of biological role, required for maturation of ribosomal RNAs and formation of the large ribosomal subunit. This chain is Pescadillo homolog, found in Leishmania major.